A 317-amino-acid polypeptide reads, in one-letter code: Putative ribosomal protein uL10-like (317 aa).

Y24 carries the phosphotyrosine modification. The residue at position 59 (T59) is a Phosphothreonine. The interval 292–317 is disordered; it reads AAAPAKVEAKEESEESDEDMGFGLFD. Residue K297 forms a Glycyl lysine isopeptide (Lys-Gly) (interchain with G-Cter in SUMO1); alternate linkage. K297 is covalently cross-linked (Glycyl lysine isopeptide (Lys-Gly) (interchain with G-Cter in SUMO2); alternate). Residues 302-311 are compositionally biased toward acidic residues; it reads EESEESDEDM. A phosphoserine mark is found at S304 and S307.

It belongs to the universal ribosomal protein uL10 family. In terms of assembly, P0 forms a pentameric complex by interaction with dimers of P1 and P2.

Functionally, ribosomal protein P0 is the functional equivalent of E.coli protein L10. The polypeptide is Putative ribosomal protein uL10-like (RPLP0P6) (Homo sapiens (Human)).